The chain runs to 1002 residues: Hypoxia up-regulated protein 1 (1002 aa).

Residues 1 to 23 (MARAPRWMLGWLLLACCVPHTEP) form the signal peptide. Disordered regions lie at residues 576–698 (LFGG…PKKQ) and 918–1002 (KPKP…NDEL). Positions 643-675 (PPKEESQKNEEGEKSEARDPKEDKETVNEEELS) are enriched in basic and acidic residues. Residues 933–947 (GKNATGTSESENTIP) show a composition bias toward polar residues. 2 stretches are compositionally biased toward basic and acidic residues: residues 951 to 962 (GKQEEKPEDISP) and 983 to 1002 (SSKK…NDEL). Residues 999–1002 (NDEL) carry the Prevents secretion from ER motif.

The protein belongs to the heat shock protein 70 family.

The protein localises to the endoplasmic reticulum lumen. In terms of biological role, has a pivotal role in cytoprotective cellular mechanisms triggered by oxygen deprivation. Promotes HSPA5/BiP-mediated ATP nucleotide exchange and thereby activates the unfolded protein response (UPR) pathway in the presence of endoplasmic reticulum stress. May play a role as a molecular chaperone and participate in protein folding. The polypeptide is Hypoxia up-regulated protein 1 (HYOU1) (Gallus gallus (Chicken)).